The chain runs to 505 residues: L-arabinose isomerase (505 aa).

The Mn(2+) site is built by E308, E335, H352, and H453.

This sequence belongs to the arabinose isomerase family. Requires Mn(2+) as cofactor.

It carries out the reaction beta-L-arabinopyranose = L-ribulose. It functions in the pathway carbohydrate degradation; L-arabinose degradation via L-ribulose; D-xylulose 5-phosphate from L-arabinose (bacterial route): step 1/3. Catalyzes the conversion of L-arabinose to L-ribulose. This is L-arabinose isomerase from Bifidobacterium animalis subsp. lactis (strain AD011).